A 165-amino-acid chain; its full sequence is Peptide deformylase (165 aa).

Fe cation-binding residues include Cys-88 and His-130. Glu-131 is a catalytic residue. Fe cation is bound at residue His-134.

Belongs to the polypeptide deformylase family. Fe(2+) is required as a cofactor.

The catalysed reaction is N-terminal N-formyl-L-methionyl-[peptide] + H2O = N-terminal L-methionyl-[peptide] + formate. Removes the formyl group from the N-terminal Met of newly synthesized proteins. Requires at least a dipeptide for an efficient rate of reaction. N-terminal L-methionine is a prerequisite for activity but the enzyme has broad specificity at other positions. This chain is Peptide deformylase, found in Borreliella burgdorferi (strain ATCC 35210 / DSM 4680 / CIP 102532 / B31) (Borrelia burgdorferi).